We begin with the raw amino-acid sequence, 380 residues long: Lipid-A-disaccharide synthase (380 aa).

Belongs to the LpxB family.

It carries out the reaction a lipid X + a UDP-2-N,3-O-bis[(3R)-3-hydroxyacyl]-alpha-D-glucosamine = a lipid A disaccharide + UDP + H(+). Its pathway is bacterial outer membrane biogenesis; LPS lipid A biosynthesis. Functionally, condensation of UDP-2,3-diacylglucosamine and 2,3-diacylglucosamine-1-phosphate to form lipid A disaccharide, a precursor of lipid A, a phosphorylated glycolipid that anchors the lipopolysaccharide to the outer membrane of the cell. The sequence is that of Lipid-A-disaccharide synthase from Vibrio vulnificus (strain CMCP6).